Consider the following 108-residue polypeptide: Mitochondrial pyruvate carrier 4 (108 aa).

A run of 3 helical transmembrane segments spans residues 19–35, 51–67, and 74–90; these read IHFW…IANI, IAVT…SMVI, and LFSV…YQLA.

This sequence belongs to the mitochondrial pyruvate carrier (MPC) (TC 2.A.105) family.

It is found in the mitochondrion inner membrane. Mediates the uptake of pyruvate into mitochondria. The polypeptide is Mitochondrial pyruvate carrier 4 (Arabidopsis thaliana (Mouse-ear cress)).